Consider the following 240-residue polypeptide: Ribosomal RNA large subunit methyltransferase E (240 aa).

Positions 1 to 28 are disordered; the sequence is MSSSPRSPDARPLKVRVKSARTRSSSSQ. 5 residues coordinate S-adenosyl-L-methionine: G80, W82, D103, D119, and D143. The active-site Proton acceptor is K183.

It belongs to the class I-like SAM-binding methyltransferase superfamily. RNA methyltransferase RlmE family.

Its subcellular location is the cytoplasm. The enzyme catalyses uridine(2552) in 23S rRNA + S-adenosyl-L-methionine = 2'-O-methyluridine(2552) in 23S rRNA + S-adenosyl-L-homocysteine + H(+). Its function is as follows. Specifically methylates the uridine in position 2552 of 23S rRNA at the 2'-O position of the ribose in the fully assembled 50S ribosomal subunit. In Azorhizobium caulinodans (strain ATCC 43989 / DSM 5975 / JCM 20966 / LMG 6465 / NBRC 14845 / NCIMB 13405 / ORS 571), this protein is Ribosomal RNA large subunit methyltransferase E.